A 71-amino-acid polypeptide reads, in one-letter code: cAMP-dependent protein kinase inhibitor beta (71 aa).

Residues Met1–Asn21 are disordered. Thr2 is modified (blocked amino end (Thr)). Ser35 is subject to Phosphoserine. The tract at residues Ala51–Lys71 is disordered.

This sequence belongs to the PKI family. As to expression, testis.

Functionally, extremely potent competitive inhibitor of cAMP-dependent protein kinase activity, this protein interacts with the catalytic subunit of the enzyme after the cAMP-induced dissociation of its regulatory chains. This Rattus norvegicus (Rat) protein is cAMP-dependent protein kinase inhibitor beta (Pkib).